The following is a 362-amino-acid chain: Protein RAFTIN 1B (362 aa).

Positions 1-20 (MARFLVALLAATLVAVQAGG) are cleaved as a signal peptide. A disordered region spans residues 58 to 94 (STSFVRDPEDRPPFDYRDYSRSSSDDEPSKSTVAASG). Basic and acidic residues predominate over residues 63–86 (RDPEDRPPFDYRDYSRSSSDDEPS). N102 is a glycosylation site (N-linked (GlcNAc...) asparagine). Residues 142-356 (FFHEEAVRVG…PYGHIIWAKN (215 aa)) form the BURP domain.

As to expression, specifically expressed in anthers, in the tapetum and microspores (at protein level).

Its function is as follows. Required for pollen development. Probably synthesized in the tapetum, packaged in Ubisch bodies and transported at appropriate stages to the micropsores. In Triticum aestivum (Wheat), this protein is Protein RAFTIN 1B (RAFTIN1B).